The sequence spans 486 residues: Protein nucleotidyltransferase YdiU (486 aa).

G90, G92, R93, K113, D125, G126, R176, and R183 together coordinate ATP. D252 functions as the Proton acceptor in the catalytic mechanism. Mg(2+)-binding residues include N253 and D262. Residue D262 participates in ATP binding.

This sequence belongs to the SELO family. Mg(2+) is required as a cofactor. Requires Mn(2+) as cofactor.

It carries out the reaction L-seryl-[protein] + ATP = 3-O-(5'-adenylyl)-L-seryl-[protein] + diphosphate. It catalyses the reaction L-threonyl-[protein] + ATP = 3-O-(5'-adenylyl)-L-threonyl-[protein] + diphosphate. The enzyme catalyses L-tyrosyl-[protein] + ATP = O-(5'-adenylyl)-L-tyrosyl-[protein] + diphosphate. The catalysed reaction is L-histidyl-[protein] + UTP = N(tele)-(5'-uridylyl)-L-histidyl-[protein] + diphosphate. It carries out the reaction L-seryl-[protein] + UTP = O-(5'-uridylyl)-L-seryl-[protein] + diphosphate. It catalyses the reaction L-tyrosyl-[protein] + UTP = O-(5'-uridylyl)-L-tyrosyl-[protein] + diphosphate. Nucleotidyltransferase involved in the post-translational modification of proteins. It can catalyze the addition of adenosine monophosphate (AMP) or uridine monophosphate (UMP) to a protein, resulting in modifications known as AMPylation and UMPylation. This is Protein nucleotidyltransferase YdiU from Pseudomonas entomophila (strain L48).